We begin with the raw amino-acid sequence, 83 residues long: Exodeoxyribonuclease 7 small subunit (83 aa).

It belongs to the XseB family. Heterooligomer composed of large and small subunits.

The protein resides in the cytoplasm. The catalysed reaction is Exonucleolytic cleavage in either 5'- to 3'- or 3'- to 5'-direction to yield nucleoside 5'-phosphates.. In terms of biological role, bidirectionally degrades single-stranded DNA into large acid-insoluble oligonucleotides, which are then degraded further into small acid-soluble oligonucleotides. The polypeptide is Exodeoxyribonuclease 7 small subunit (Aeromonas salmonicida (strain A449)).